A 247-amino-acid chain; its full sequence is Membrane-embedded CAAX protease MroQ (247 aa).

The N-terminal stretch at 1–17 (MTRLWASLLTVIIYILS) is a signal peptide. Transmembrane regions (helical) follow at residues 42 to 62 (VIYI…LINL), 81 to 101 (IIPW…VVSI), and 119 to 139 (LIII…IGPL). Residue Glu141 is part of the active site. 2 helical membrane passes run 162 to 182 (IVAF…AHND) and 183 to 203 (FKFI…YVWT).

It belongs to the peptidase U48 family.

The protein resides in the membrane. Functionally, participates in the regulation of the Agr quorum sensing activity and plays thereby an important role in virulence. Mechanistically, elicits a protease dependent control of Agr activity without playing a role in the processing of the pheromone-precursor AgrD. The protein is Membrane-embedded CAAX protease MroQ (mroQ) of Staphylococcus aureus (strain USA300).